The following is a 334-amino-acid chain: Siroheme decarboxylase (334 aa).

H93 is a catalytic residue.

This sequence belongs to the Ahb/Nir family.

The enzyme catalyses siroheme + 2 H(+) = 12,18-didecarboxysiroheme + 2 CO2. The protein operates within porphyrin-containing compound metabolism. Functionally, involved in heme d1 biosynthesis. Catalyzes the decarboxylation of siroheme into didecarboxysiroheme. Siroheme is probably decarboxylated to monodecarboxysiroheme, which is in turn decarboxylated to didecarboxysiroheme. The sequence is that of Siroheme decarboxylase from Hydrogenobacter thermophilus (strain DSM 6534 / IAM 12695 / TK-6).